Reading from the N-terminus, the 398-residue chain is Beta-1,6-galactosyltransferase GALT29A (398 aa).

The Cytoplasmic segment spans residues 1–6 (MKRSVR). A helical; Signal-anchor for type II membrane protein transmembrane segment spans residues 7-27 (PLFSALLFAFFAATLICRVAI). At 28–398 (RRSSFSFASA…FKIPLVQVYH (371 aa)) the chain is on the lumenal side. 2 N-linked (GlcNAc...) asparagine glycosylation sites follow: asparagine 221 and asparagine 346.

Belongs to the glycosyltransferase 29 family. Interacts with GALT31A.

It is found in the golgi apparatus membrane. Functionally, galactosyltransferase involved in the biosynthesis of type II arabinogalactan. Possesses galactosyltransferase (GalT) activity in vitro, transferring galactose from UDP-galactose to a mixture of various oligosaccharides derived from arabinogalactan proteins. Forms a complex with GALT31A that can work cooperatively to enhance the activities of adding galactose residues at O6 positions to beta-1,6-galactan and beta-1,3-galactan. The chain is Beta-1,6-galactosyltransferase GALT29A from Arabidopsis thaliana (Mouse-ear cress).